Consider the following 307-residue polypeptide: Methionyl-tRNA formyltransferase (307 aa).

108–111 (SLLP) provides a ligand contact to (6S)-5,6,7,8-tetrahydrofolate.

Belongs to the Fmt family.

It carries out the reaction L-methionyl-tRNA(fMet) + (6R)-10-formyltetrahydrofolate = N-formyl-L-methionyl-tRNA(fMet) + (6S)-5,6,7,8-tetrahydrofolate + H(+). Its function is as follows. Attaches a formyl group to the free amino group of methionyl-tRNA(fMet). The formyl group appears to play a dual role in the initiator identity of N-formylmethionyl-tRNA by promoting its recognition by IF2 and preventing the misappropriation of this tRNA by the elongation apparatus. The sequence is that of Methionyl-tRNA formyltransferase from Stenotrophomonas maltophilia (strain R551-3).